The sequence spans 758 residues: RNA-directed RNA polymerase catalytic subunit (758 aa).

Residues 50 to 82 (SEKGKWTTNTETGAPQLNPIDGPLPEDNEPSGY) form a disordered region. Positions 55–64 (WTTNTETGAP) are enriched in polar residues. 2 consecutive short sequence motifs (nuclear localization signal) follow at residues 187–195 (RKRRVRDNI) and 203–216 (RTIG…NKRS). A promoter-binding site region spans residues 249–256 (RGFVYFVE). The region spanning 286-483 (VRKMMTNSQD…GINMSKKKSY (198 aa)) is the RdRp catalytic domain.

The protein belongs to the influenza viruses polymerase PB1 family. As to quaternary structure, influenza RNA polymerase is composed of three subunits: PB1, PB2 and PA. Interacts (via N-terminus) with PA (via C-terminus). Interacts (via C-terminus) with PB2 (via N-terminus); this interaction is essential for transcription initiation. Phosphorylated by host PRKCA.

The protein localises to the host nucleus. Its subcellular location is the host cytoplasm. It carries out the reaction RNA(n) + a ribonucleoside 5'-triphosphate = RNA(n+1) + diphosphate. In terms of biological role, RNA-dependent RNA polymerase which is responsible for replication and transcription of virus RNA segments. The transcription of viral mRNAs occurs by a unique mechanism called cap-snatching. 5' methylated caps of cellular mRNAs are cleaved after 10-13 nucleotides by PA. In turn, these short capped RNAs are used as primers by PB1 for transcription of viral mRNAs. During virus replication, PB1 initiates RNA synthesis and copy vRNA into complementary RNA (cRNA) which in turn serves as a template for the production of more vRNAs. This Influenza A virus (strain A/Chicken/Scotland/1959 H5N1) protein is RNA-directed RNA polymerase catalytic subunit.